Reading from the N-terminus, the 385-residue chain is Glutamate 5-kinase (385 aa).

Lys18 lines the ATP pocket. Substrate is bound by residues Ser57, Asp144, and Asn156. ATP is bound at residue 218–224; sequence TGGMKSK. A PUA domain is found at 283-361; it reads RGVLSIDAGA…SRIEQVLGHK (79 aa).

It belongs to the glutamate 5-kinase family.

Its subcellular location is the cytoplasm. It carries out the reaction L-glutamate + ATP = L-glutamyl 5-phosphate + ADP. Its pathway is amino-acid biosynthesis; L-proline biosynthesis; L-glutamate 5-semialdehyde from L-glutamate: step 1/2. Catalyzes the transfer of a phosphate group to glutamate to form L-glutamate 5-phosphate. The chain is Glutamate 5-kinase from Syntrophus aciditrophicus (strain SB).